The sequence spans 91 residues: MKHVLTLLALASVFAVSNQALAYDGQNCKEPGNCWENKPGYPEKIAGSKYDPKHDPVELNKQEESIKAMDARNAKRIANAKSSGNFVFDVK.

The N-terminal stretch at Met-1–Ala-22 is a signal peptide. Cys-28 and Cys-34 are disulfide-bonded.

The protein belongs to the methanol dehydrogenase subunit 2 family. As to quaternary structure, heterotetramer composed of 2 alpha and 2 beta subunits.

Its subcellular location is the cell inner membrane. The enzyme catalyses 2 Fe(III)-[cytochrome cL] + a primary alcohol = 2 Fe(II)-[cytochrome cL] + an aldehyde + 2 H(+). Its function is as follows. Catalyzes the oxidation of primary alcohols including methanol. This is Methanol dehydrogenase [cytochrome c] subunit 2 (moxI) from Methylophilus methylotrophus (Bacterium W3A1).